Reading from the N-terminus, the 212-residue chain is Prolactin (212 aa).

Positions 1 to 26 are cleaved as a signal peptide; the sequence is MARCCKCPRLHLAVTVLACVLVFTEG. Intrachain disulfides connect Cys-71–Cys-185 and Cys-202–Cys-212.

It belongs to the somatotropin/prolactin family. As to expression, pituitary gland.

The protein localises to the secreted. The chain is Prolactin (prl) from Ictalurus punctatus (Channel catfish).